The chain runs to 323 residues: tRNA U34 carboxymethyltransferase (323 aa).

Residues lysine 91, tryptophan 105, lysine 110, glycine 130, 181 to 182 (IE), methionine 196, tyrosine 200, and arginine 315 each bind carboxy-S-adenosyl-L-methionine.

The protein belongs to the class I-like SAM-binding methyltransferase superfamily. CmoB family. Homotetramer.

It catalyses the reaction carboxy-S-adenosyl-L-methionine + 5-hydroxyuridine(34) in tRNA = 5-carboxymethoxyuridine(34) in tRNA + S-adenosyl-L-homocysteine + H(+). In terms of biological role, catalyzes carboxymethyl transfer from carboxy-S-adenosyl-L-methionine (Cx-SAM) to 5-hydroxyuridine (ho5U) to form 5-carboxymethoxyuridine (cmo5U) at position 34 in tRNAs. The polypeptide is tRNA U34 carboxymethyltransferase (Yersinia pestis bv. Antiqua (strain Antiqua)).